The following is a 557-amino-acid chain: MLLSRMKPAVGGEASTSSNEKKRKNKSKKIPRLEDYLNQRDYLGALTLLEFQRNSGVSVEHADLWTGFCAFHVGDHKRAMEEYKALTLRPDCPVDVWVYLGCALFFLGLYKEAEEAALKGSKTQLQNRLLFHLAHKFNDEKKLMGFHQNLEDVTEDQLSLASIHYMRSHYQEAIDIYKRILLQNREFLALNVYVALCYYKLDYYDVSQEVLAVYLQSIPDSTIALNLKACNHFRLYNGKAAETELKNLIDISSSSFQFAKELIQHNLVVFRGGEGALQVLPPLIDVISEARLNLVIYYLRQDDIQEAYKLIKDLEPTTPQEYILKGVVNAALGQEIGSRDHLKIAQQFFQLVGGSASECDTIPGRQCMASCFFLLKQFEDVLIYLNSVKSYFYNDDTFSFNYAQAKAALGNYREAEELFLLIQNEKIKSDYVFQSWLARCYIMNQKPRQAWELYLRMETSSDPFSLLQLIANDCYKMGQFYYAAKAFDALERLDPNPEYWEGKRGACVGIFQLILAGRESREILKEVLPMLRSTGNPQVEYIIRIMKKWAKDNRVAL.

The tract at residues 1 to 30 (MLLSRMKPAVGGEASTSSNEKKRKNKSKKI) is disordered. Over residues 21 to 30 (KKRKNKSKKI) the composition is skewed to basic residues. TPR repeat units follow at residues 60-93 (EHAD…PDCP), 95-128 (DVWV…LQNR), 154-187 (TEDQ…NREF), and 471-504 (ANDC…EGKR).

Belongs to the IFT56 family. As to quaternary structure, component of the IFT complex B.

Its subcellular location is the cell projection. The protein resides in the cilium. Component of the intraflagellar transport (IFT) complex B required for transport of proteins in the motile cilium. Required for transport of specific ciliary cargo proteins related to motility, while it is neither required for IFT complex B assembly or motion nor for cilium assembly. Plays a key role in maintaining the integrity of the IFT complex B and the proper ciliary localization of the IFT complex B components. Essential for maintaining proper microtubule organization within the ciliary axoneme. This chain is Intraflagellar transport protein 56, found in Danio rerio (Zebrafish).